The primary structure comprises 158 residues: Large ribosomal subunit protein bL19 (158 aa).

Residues 119-129 show a composition bias toward basic and acidic residues; that stretch reads SDRSRVMKDAA. The tract at residues 119–158 is disordered; sequence SDRSRVMKDAARAQQARDAAQGNSSSETQSSTAAVETQGE. The span at 130–139 shows a compositional bias: low complexity; the sequence is RAQQARDAAQ. Residues 140–158 show a composition bias toward polar residues; the sequence is GNSSSETQSSTAAVETQGE.

It belongs to the bacterial ribosomal protein bL19 family.

In terms of biological role, this protein is located at the 30S-50S ribosomal subunit interface and may play a role in the structure and function of the aminoacyl-tRNA binding site. The polypeptide is Large ribosomal subunit protein bL19 (Deinococcus geothermalis (strain DSM 11300 / CIP 105573 / AG-3a)).